A 427-amino-acid chain; its full sequence is Glutamate-1-semialdehyde 2,1-aminomutase (427 aa).

Position 265 is an N6-(pyridoxal phosphate)lysine (Lys-265).

Belongs to the class-III pyridoxal-phosphate-dependent aminotransferase family. HemL subfamily. In terms of assembly, homodimer. The cofactor is pyridoxal 5'-phosphate.

It is found in the cytoplasm. The enzyme catalyses (S)-4-amino-5-oxopentanoate = 5-aminolevulinate. The protein operates within porphyrin-containing compound metabolism; protoporphyrin-IX biosynthesis; 5-aminolevulinate from L-glutamyl-tRNA(Glu): step 2/2. This chain is Glutamate-1-semialdehyde 2,1-aminomutase, found in Bordetella avium (strain 197N).